We begin with the raw amino-acid sequence, 157 residues long: MLKTTKKSLLVFMGVFFLIFGVDQAIKYAILEGFRYESLMIDIVLVFNKGVAFSLLSFLEGGLKYLQILLILGLFIFLMRQRELFKNHAIEFGMVFGAGVSNVLDRFVHGGVVDYVYYHYGFDFAIFNFADVMIDVGVGVLLLKQFFFKQKQNKIKA.

3 helical membrane-spanning segments follow: residues 10–30, 58–78, and 84–104; these read LVFMGVFFLIFGVDQAIKYAI, FLEGGLKYLQILLILGLFIFL, and LFKNHAIEFGMVFGAGVSNVL. Catalysis depends on residues Asp114 and Asp131. A helical transmembrane segment spans residues 122–142; that stretch reads FDFAIFNFADVMIDVGVGVLL.

Belongs to the peptidase A8 family.

The protein resides in the cell inner membrane. It carries out the reaction Release of signal peptides from bacterial membrane prolipoproteins. Hydrolyzes -Xaa-Yaa-Zaa-|-(S,diacylglyceryl)Cys-, in which Xaa is hydrophobic (preferably Leu), and Yaa (Ala or Ser) and Zaa (Gly or Ala) have small, neutral side chains.. It participates in protein modification; lipoprotein biosynthesis (signal peptide cleavage). In terms of biological role, this protein specifically catalyzes the removal of signal peptides from prolipoproteins. This Helicobacter pylori (strain ATCC 700392 / 26695) (Campylobacter pylori) protein is Lipoprotein signal peptidase.